The chain runs to 411 residues: Copper resistance protein CRF1 (411 aa).

Positions 1–40 form a DNA-binding region, copper-fist; the sequence is MVVIEGIKYACERCIRGHRVSSCTHTQQPLIRIKPKGRPA. Residues cysteine 11, cysteine 14, cysteine 23, and histidine 25 each contribute to the Zn(2+) site. 4 stretches are compositionally biased toward low complexity: residues 115 to 190, 205 to 214, 227 to 241, and 350 to 370; these read QQQA…PHSP, SSSSLSSLHS, SHNS…ANSP, and SVAA…PPSS. Disordered stretches follow at residues 115–241 and 348–389; these read QQQA…ANSP and EMSV…VSPA.

The protein resides in the nucleus. In terms of biological role, transcriptional regulator involved in resistance to high copper concentration. The polypeptide is Copper resistance protein CRF1 (CRF1) (Yarrowia lipolytica (strain CLIB 122 / E 150) (Yeast)).